Consider the following 115-residue polypeptide: NADH-ubiquinone oxidoreductase chain 3 (115 aa).

A run of 3 helical transmembrane segments spans residues leucine 4–leucine 24, phenylalanine 55–isoleucine 75, and methionine 87–isoleucine 107.

Belongs to the complex I subunit 3 family. Core subunit of respiratory chain NADH dehydrogenase (Complex I) which is composed of 45 different subunits. Interacts with TMEM186. Interacts with TMEM242.

The protein localises to the mitochondrion inner membrane. The enzyme catalyses a ubiquinone + NADH + 5 H(+)(in) = a ubiquinol + NAD(+) + 4 H(+)(out). Core subunit of the mitochondrial membrane respiratory chain NADH dehydrogenase (Complex I) which catalyzes electron transfer from NADH through the respiratory chain, using ubiquinone as an electron acceptor. Essential for the catalytic activity of complex I. This is NADH-ubiquinone oxidoreductase chain 3 from Neotoma floridana (Eastern woodrat).